A 3957-amino-acid chain; its full sequence is MMNEDAAQKSDSGEKFNGSSQRRKRPKKSDSNASFLRAARAGNLDKVVEYLKGGIDINTCNQNGLNALHLAAKEGHVGLVQELLGRGSSVDSATKKGNTALHIASLAGQAEVVKVLVKEGANINAQSQNGFTPLYMAAQENHIDVVKYLLENGANQSTATEDGFTPLAVALQQGHNQAVAILLENDTKGKVRLPALHIAARKDDTKSAALLLQNDHNADVQSKMMVNRTTESGFTPLHIAAHYGNVNVATLLLNRGAAVDFTARNGITPLHVASKRGNTNMVKLLLDRGGQIDAKTRDGLTPLHCAARSGHDQVVELLLERGAPLLARTKNGLSPLHMAAQGDHVECVKHLLQHKAPVDDVTLDYLTALHVAAHCGHYRVTKLLLDKRANPNARALNGFTPLHIACKKNRIKVMELLVKYGASIQAITESGLTPIHVAAFMGHLNIVLLLLQNGASPDVTNIRGETALHMAARAGQVEVVRCLLRNGALVDARAREEQTPLHIASRLGKTEIVQLLLQHMAHPDAATTNGYTPLHISAREGQVDVASVLLEAGAAHSLATKKGFTPLHVAAKYGSLDVAKLLLQRRAAADSAGKNGLTPLHVAAHYDNQKVALLLLEKGASPHATAKNGYTPLHIAAKKNQMQIASTLLNYGAETNIVTKQGVTPLHLASQEGHTDMVTLLLDKGANIHMSTKSGLTSLHLAAQEDKVNVADILTKHGADQDAHTKLGYTPLIVACHYGNVKMVNFLLKQGANVNAKTKNGYTPLHQAAQQGHTHIINVLLQHGAKPNATTANGNTALAIAKRLGYISVVDTLKVVTEEVTTTTTTITEKHKLNVPETMTEVLDVSDEEGDDTMTGDGGEYLRPEDLKELGDDSLPSSQFLDGMNYLRYSLEGGRSDSLRSFSSDRSHTLSHASYLRDSAVMDDSVVIPSHQVSTLAKEAERNSYRLSWGTENLDNVALSSSPIHSGFLVSFMVDARGGAMRGCRHNGLRIIIPPRKCTAPTRVTCRLVKRHRLATMPPMVEGEGLASRLIEVGPSGAQFLGKLHLPTAPPPLNEGESLVSRILQLGPPGTKFLGPVIVEIPHFAALRGKERELVVLRSENGDSWKEHFCDYTEDELNEILNGMDEVLDSPEDLEKKRICRIITRDFPQYFAVVSRIKQDSNLIGPEGGVLSSTVVPQVQAVFPEGALTKRIRVGLQAQPMHSELVKKILGNKATFSPIVTLEPRRRKFHKPITMTIPVPKASSDVMLNGFGGDAPTLRLLCSITGGTTPAQWEDITGTTPLTFVNECVSFTTNVSARFWLIDCRQIQESVTFASQVYREIICVPYMAKFVVFAKSHDPIEARLRCFCMTDDKVDKTLEQQENFAEVARSRDVEVLEGKPIYVDCFGNLVPLTKSGQHHIFSFFAFKENRLPLFVKVRDTTQEPCGRLSFMKEPKSTRGLVHQAICNLNITLPIYTKESESDQEQEEEIDMTSEKNDETESTETSVLKSHLVNEVPVLASPDLLSEVSEMKQDLIKMTAILTTDVSDKAGSIKVKELVKAAEEEPGEPFEIVERVKEDLEKVNEILRSGTCTRDESSVQSSRSERGLVEEEWVIVSDEEIEEARQKAPLEITEYPCVEVRIDKEIKGKVEKDSTGLVNYLTDDLNTCVPLPKEQLQTVQDKAGKKCEALAVGRSSEKEGKDIPPDETQSTQKQHKPSLGIKKPVRRKLKEKQKQKEEGLQASAEKAELKKGSSEESLGEDPGLAPEPLPTVKATSPLIEETPIGSIKDKVKALQKRVEDEQKGRSKLPIRVKGKEDVPKKTTHRPHPAASPSLKSERHAPGSPSPKTERHSTLSSSAKTERHPPVSPSSKTEKHSPVSPSAKTERHSPASSSSKTEKHSPVSPSTKTERHSPVSSTKTERHPPVSPSGKTDKRPPVSPSGRTEKHPPVSPGRTEKRLPVSPSGRTDKHQPVSTAGKTEKHLPVSPSGKTEKQPPVSPTSKTERIEETMSVRELMKAFQSGQDPSKHKTGLFEHKSAKQKQPQEKGKVRVEKEKGPILTQREAQKTENQTIKRGQRLPVTGTAESKRGVRVSSIGVKKEDAAGGKEKVLSHKIPEPVQSVPEEESHRESEVPKEKMADEQGDMDLQISPDRKTSTDFSEVIKQELEDNDKYQQFRLSEETEKAQLHLDQVLTSPFNTTFPLDYMKDEFLPALSLQSGALDGSSESLKNEGVAGSPCGSLMEGTPQISSEESYKHEGLAETPETSPESLSFSPKKSEEQTGETKESTKTETTTEIRSEKEHPTTKDITGGSEERGATVTEDSETSTESFQKEATLGSPKDTSPKRQDDCTGSCSVALAKETPTGLTEEAACDEGQRTFGSSAHKTQTDSEVQESTATSDETKALPLPEASVKTDTGTESKPQGVIRSPQGLELALPSRDSEVLSAVADDSLAVSHKDSLEASPVLEDNSSHKTPDSLEPSPLKESPCRDSLESSPVEPKMKAGIFPSHFPLPAAVAKTELLTEVASVRSRLLRDPDGSAEDDSLEQTSLMESSGKSPLSPDTPSSEEVSYEVTPKTTDVSTPKPAVIHECAEEDDSENGEKKRFTPEEEMFKMVTKIKMFDELEQEAKQKRDYKKEPKQEESSSSSDPDADCSVDVDEPKHTGSGEDESGVPVLVTSESRKVSSSSESEPELAQLKKGADSGLLPEPVIRVQPPSPLPSSMDSNSSPEEVQFQPVVSKQYTFKMNEDTQEEPGKSEEEKDSESHLAEDRHAVSTEAEDRSYDKLNRDTDQPKICDGHGCEAMSPSSSAAPVSSGLQSPTGDDVDEQPVIYKESLALQGTHEKDTEGEELDVSRAESPQADCPSESFSSSSSLPHCLVSEGKELDEDISATSSIQKTEVTKTDETFENLPKDCPSQDSSITTQTDRFSMDVPVSDLAENDEIYDPQITSPYENVPSQSFFSSEESKTQTDANHTTSFHSSEVYSVTITSPVEDVVVASSSSGTVLSKESNFEGQDIKMESQQESTLWEMQSDSVSSSFEPTMSATTTVVGEQISKVIITKTDVDSDSWSEIREDDEAFEARVKEEEQKIFGLMVDRQSQGTTPDTTPARTPTEEGTPTSEQNPFLFQEGKLFEMTRSGAIDMTKRSYADESFHFFQIGQESREETLSEDVKEGATGADPLPLETSAESLALSESKETVDDEADLLPDDVSEEVEEIPASDAQLNSQMGISASTETPTKEAVSVGTKDLPTVQTGDIPPLSGVKQISCPDSSEPAVQVQLDFSTLTRSVYSDRGDDSPDSSPEEQKSVIEIPTAPMENVPFTESKSKIPVRTMPTSTPAPPSAEYESSVSEDFLSSVDEENKADEAKPKSKLPVKVPLQRVEQQLSDLDTSVQKTVAPQGQDMASIAPDNRSKSESDASSLDSKTKCPVKTRSYTETETESRERAEELELESEEGATRPKILTSRLPVKSRSTTSSCRGGTSPTKESKEHFFDLYRNSIEFFEEISDEASKLVDRLTQSEREQEIVSDDESSSALEVSVIENLPPVETEHSVPEDIFDTRPIWDESIETLIERIPDENGHDHAEDPQDEQERIEERLAYIADHLGFSWTELARELDFTEEQIHQIRIENPNSLQDQSHALLKYWLERDGKHATDTNLVECLTKINRMDIVHLMETNTEPLQERISHSYAEIEQTITLDHSEGFSVLQEELCTAQHKQKEEQAVSKESETCDHPPIVSEEDISVGYSTFQDGVPKTEGDSSATALFPQTHKEQVQQDFSGKMQDLPEESSLEYQQEYFVTTPGTETSETQKAMIVPSSPSKTPEEVSTPAEEEKLYLQTPTSSERGGSPIIQEPEEPSEHREESSPRKTSLVIVESADNQPETCERLDEDAAFEKGDDMPEIPPETVTEEEYIDEHGHTVVKKVTRKIIRRYVSSEGTEKEEIMVQGMPQEPVNIEEGDGYSKVIKRVVLKSDTEQSEDNNE.

The segment covering 1–14 has biased composition (basic and acidic residues); it reads MMNEDAAQKSDSGE. The interval 1–34 is disordered; that stretch reads MMNEDAAQKSDSGEKFNGSSQRRKRPKKSDSNAS. 24 ANK repeats span residues 30 to 62, 63 to 92, 96 to 125, 129 to 158, 162 to 191, 193 to 220, 232 to 261, 265 to 294, 298 to 327, 331 to 360, 364 to 393, 397 to 426, 430 to 459, 463 to 492, 496 to 525, 529 to 558, 562 to 591, 595 to 624, 628 to 657, 661 to 690, 694 to 723, 727 to 756, 760 to 789, and 793 to 822; these read DSNASFLRAARAGNLDKVVEYLKGGIDINTCNQ, NGLNALHLAAKEGHVGLVQELLGRGSSVDS, KGNTALHIASLAGQAEVVKVLVKEGANINA, NGFTPLYMAAQENHIDVVKYLLENGANQST, DGFTPLAVALQQGHNQAVAILLENDTKGKV, LPALHIAARKDDTKSAALLLQNDHNADV, SGFTPLHIAAHYGNVNVATLLLNRGAAVDF, NGITPLHVASKRGNTNMVKLLLDRGGQIDA, DGLTPLHCAARSGHDQVVELLLERGAPLLA, NGLSPLHMAAQGDHVECVKHLLQHKAPVDD, DYLTALHVAAHCGHYRVTKLLLDKRANPNA, NGFTPLHIACKKNRIKVMELLVKYGASIQA, SGLTPIHVAAFMGHLNIVLLLLQNGASPDV, RGETALHMAARAGQVEVVRCLLRNGALVDA, EEQTPLHIASRLGKTEIVQLLLQHMAHPDA, NGYTPLHISAREGQVDVASVLLEAGAAHSL, KGFTPLHVAAKYGSLDVAKLLLQRRAAADS, NGLTPLHVAAHYDNQKVALLLLEKGASPHA, NGYTPLHIAAKKNQMQIASTLLNYGAETNI, QGVTPLHLASQEGHTDMVTLLLDKGANIHM, SGLTSLHLAAQEDKVNVADILTKHGADQDA, LGYTPLIVACHYGNVKMVNFLLKQGANVNA, NGYTPLHQAAQQGHTHIINVLLQHGAKPNA, and NGNTALAIAKRLGYISVVDTLKVVTEEVTT. Residues Ser31 and Ser34 each carry the phosphoserine modification. Tyr378 is subject to Phosphotyrosine. The residue at position 531 (Tyr531) is a Phosphotyrosine. Ser846 carries the post-translational modification Phosphoserine. Thr853 carries the post-translational modification Phosphothreonine. A Phosphoserine modification is found at Ser874. The interval 966 to 1125 is interaction with SPTBN1; the sequence is SGFLVSFMVD…ELNEILNGMD (160 aa). 2 consecutive ZU5 domains span residues 968 to 1156 and 1158 to 1304; these read FLVS…VVSR and KQDS…LIDC. The UPA domain stretch occupies residues 1289 to 1423; sequence VSFTTNVSAR…FVKVRDTTQE (135 aa). A Phosphotyrosine modification is found at Tyr1382. The region spanning 1450–1535 is the Death 1 domain; it reads ITLPIYTKES…SDKAGSIKVK (86 aa). Positions 1457–1486 are disordered; sequence KESESDQEQEEEIDMTSEKNDETESTETSV. A phosphoserine mark is found at Ser1459, Ser1461, Ser1473, Ser1500, and Ser1596. Over residues 1461 to 1471 the composition is skewed to acidic residues; it reads SDQEQEEEIDM. Disordered stretches follow at residues 1670–2137, 2197–2411, 2430–2484, 2507–2586, 2604–2852, 2864–2904, and 2923–2951; these read AVGR…TDFS, ALDG…GLEL, AVSH…GIFP, SRLL…TPEE, EAKQ…SLPH, DISA…TDRF, and QITSPYENVPSQSFFSSEESKTQTDANHT. Basic and acidic residues-rich tracts occupy residues 1674 to 1683 and 1711 to 1733; these read SSEKEGKDIP and KQKQKEEGLQASAEKAELKKGSS. Ser1732, Ser1733, and Ser1736 each carry phosphoserine. Basic and acidic residues predominate over residues 1766–1783; the sequence is IKDKVKALQKRVEDEQKG. 7 Repeat A repeats span residues 1806-1817, 1818-1829, 1830-1841, 1842-1853, 1854-1865, 1866-1877, and 1878-1889; these read HPAASPSLKSER, HAPGSPSPKTER, HSTLSSSAKTER, HPPVSPSSKTEK, HSPVSPSAKTER, HSPASSSSKTEK, and HSPVSPSTKTER. A repeat-rich region region spans residues 1806–1983; sequence HPAASPSLKS…PVSPTSKTER (178 aa). 2 positions are modified to phosphoserine: Ser1855 and Ser1858. Basic and acidic residues-rich tracts occupy residues 1886–1902 and 1921–1937; these read KTERHSPVSSTKTERHP and RTEKHPPVSPGRTEKRL. A Repeat A; approximate repeat occupies 1890–1900; that stretch reads HSPVSSTKTER. Repeat A repeat units lie at residues 1901–1912 and 1913–1924; these read HPPVSPSGKTDK and RPPVSPSGRTEK. Residues 1925–1935 form a Repeat A; approximate repeat; it reads HPPVSPGRTEK. Phosphoserine is present on Ser1929. Repeat A repeat units follow at residues 1936–1947, 1948–1959, 1960–1971, and 1972–1983; these read RLPVSPSGRTDK, HQPVSTAGKTEK, HLPVSPSGKTEK, and QPPVSPTSKTER. Basic and acidic residues-rich tracts occupy residues 1980-1994, 2003-2034, 2075-2093, and 2102-2117; these read KTERIEETMSVRELM, PSKHKTGLFEHKSAKQKQPQEKGKVRVEKEKG, VKKEDAAGGKEKVLSHKIP, and EESHRESEVPKEKMAD. Ser2127 bears the Phosphoserine mark. The segment covering 2128–2137 has biased composition (basic and acidic residues); sequence PDRKTSTDFS. Phosphothreonine is present on Thr2239. A compositionally biased stretch (polar residues) spans 2240–2251; the sequence is PETSPESLSFSP. Residue Ser2243 is modified to Phosphoserine. The span at 2252–2282 shows a compositional bias: basic and acidic residues; the sequence is KKSEEQTGETKESTKTETTTEIRSEKEHPTT. Thr2269 carries the post-translational modification Phosphothreonine. Ser2275 bears the Phosphoserine mark. Residues 2355-2376 show a composition bias toward polar residues; that stretch reads TFGSSAHKTQTDSEVQESTATS. Phosphoserine is present on residues Ser2405, Ser2440, Ser2454, Ser2516, and Ser2521. A compositionally biased stretch (polar residues) spans 2523–2545; that stretch reads EQTSLMESSGKSPLSPDTPSSEE. 2 stretches are compositionally biased toward basic and acidic residues: residues 2576–2586 and 2604–2619; these read NGEKKRFTPEE and EAKQKRDYKKEPKQEE. Thr2583 carries the phosphothreonine modification. 2 positions are modified to phosphoserine: Ser2679 and Ser2701. Residues 2696-2705 show a composition bias toward low complexity; the sequence is PSSMDSNSSP. Residues 2729–2776 show a composition bias toward basic and acidic residues; that stretch reads EPGKSEEEKDSESHLAEDRHAVSTEAEDRSYDKLNRDTDQPKICDGHG. Phosphoserine occurs at positions 2781 and 2795. Residues 2781–2791 are compositionally biased toward low complexity; the sequence is SPSSSAAPVSS. The segment covering 2892 to 2903 has biased composition (polar residues); the sequence is SQDSSITTQTDR. Ser2956 carries the phosphoserine modification. 3 disordered regions span residues 2987 to 3016, 3069 to 3099, and 3136 to 3462; these read NFEGQDIKMESQQESTLWEMQSDSVSSSFE, LMVDRQSQGTTPDTTPARTPTEEGTPTSEQN, and QESR…PTKE. The segment covering 2998–3016 has biased composition (polar residues); sequence QQESTLWEMQSDSVSSSFE. Ser3075 is subject to Phosphoserine. Thr3078 carries the post-translational modification Phosphothreonine. Positions 3078-3087 are enriched in low complexity; that stretch reads TTPDTTPART. Positions 3090–3099 are enriched in polar residues; that stretch reads EEGTPTSEQN. Residues 3137–3149 are compositionally biased toward basic and acidic residues; the sequence is ESREETLSEDVKE. Residues 3157–3169 show a composition bias toward low complexity; the sequence is LPLETSAESLALS. A compositionally biased stretch (acidic residues) spans 3175–3194; it reads VDDEADLLPDDVSEEVEEIP. Composition is skewed to polar residues over residues 3198 to 3212 and 3256 to 3265; these read AQLNSQMGISASTET and LDFSTLTRSV. Residues Ser3273, Ser3276, and Ser3277 each carry the phosphoserine modification. A compositionally biased stretch (basic and acidic residues) spans 3335-3344; it reads EENKADEAKP. The span at 3357-3374 shows a compositional bias: polar residues; it reads VEQQLSDLDTSVQKTVAP. 2 positions are modified to phosphoserine: Ser3390 and Ser3409. The span at 3409–3423 shows a compositional bias: basic and acidic residues; it reads SYTETETESRERAEE. A compositionally biased stretch (low complexity) spans 3446-3460; the sequence is SRSTTSSCRGGTSPT. At Ser3474 the chain carries Phosphoserine. The Death 2 domain occupies 3569 to 3653; sequence IEERLAYIAD…DIVHLMETNT (85 aa). Phosphoserine is present on Ser3735. 4 positions are modified to phosphothreonine: Thr3776, Thr3797, Thr3803, and Thr3814. The disordered stretch occupies residues 3777-3858; the sequence is PGTETSETQK…VESADNQPET (82 aa). Ser3823 is subject to Phosphoserine. Residues 3832-3841 are compositionally biased toward basic and acidic residues; it reads PSEHREESSP. Ser3909 carries the post-translational modification Phosphoserine.

In terms of assembly, interacts with RHBG and SPTBN1. Colocalizes with Na/K ATPase, Na/Ca exchanger and SPTBN1. Directly interacts with DMD; this interaction is necessary for DMD localization at the sarcolemma. Interacts with DCTN4; this interaction is required for DCTN4 retention at costameres. Identified in complexes that contain VIM, EZR, AHNAK, BFSP1, BFSP2, ANK2, PLEC, PRX and spectrin. Interacts (via death domain) with RABGAP1L (via Rab-GAP TBC domain). Post-translationally, phosphorylated at multiple sites by different protein kinases and each phosphorylation event regulates the protein's structure and function. In terms of tissue distribution, present in plasma membrane of neurons as well as glial cells throughout the brain. Expressed in fetal brain and in temporal cortex of adult brain. Also expressed in the inner segments of rod photoreceptors in retina.

The protein localises to the cytoplasm. Its subcellular location is the cytoskeleton. The protein resides in the membrane. It is found in the myofibril. It localises to the sarcomere. The protein localises to the m line. Its subcellular location is the apical cell membrane. The protein resides in the cell membrane. It is found in the postsynaptic cell membrane. It localises to the early endosome. The protein localises to the recycling endosome. Its subcellular location is the lysosome. The protein resides in the mitochondrion. It is found in the z line. It localises to the sarcolemma. The protein localises to the T-tubule. Its function is as follows. Plays an essential role in the localization and membrane stabilization of ion transporters and ion channels in several cell types, including cardiomyocytes, as well as in striated muscle cells. In skeletal muscle, required for proper localization of DMD and DCTN4 and for the formation and/or stability of a special subset of microtubules associated with costameres and neuromuscular junctions. In cardiomyocytes, required for coordinate assembly of Na/Ca exchanger, SLC8A1/NCX1, Na/K ATPases ATP1A1 and ATP1A2 and inositol 1,4,5-trisphosphate (InsP3) receptors at sarcoplasmic reticulum/sarcolemma sites. Required for expression and targeting of SPTBN1 in neonatal cardiomyocytes and for the regulation of neonatal cardiomyocyte contraction rate. In the inner segment of rod photoreceptors, required for the coordinated expression of the Na/K ATPase, Na/Ca exchanger and beta-2-spectrin (SPTBN1). Plays a role in endocytosis and intracellular protein transport. Associates with phosphatidylinositol 3-phosphate (PI3P)-positive organelles and binds dynactin to promote long-range motility of cells. Recruits RABGAP1L to (PI3P)-positive early endosomes, where RABGAP1L inactivates RAB22A, and promotes polarized trafficking to the leading edge of the migrating cells. Part of the ANK2/RABGAP1L complex which is required for the polarized recycling of fibronectin receptor ITGA5 ITGB1 to the plasma membrane that enables continuous directional cell migration. The polypeptide is Ankyrin-2 (ANK2) (Homo sapiens (Human)).